Consider the following 396-residue polypeptide: MSEFIAENRGANAITRPNWSAVFSVAFCVACLIIVEFLPVSLLTPMAQDLGISEGVAGQSVTVTAFVAMFASLFITQTIQATDRRYVVILFAVLLTLSCLLVSFANSFSLLLIGRACLGVALGGFWAISASLTMRLVPPRTVPKALSVIFGAVSIALVIAAPLGSFLGELIGWRNVFNAAAAMGVLCIFWIIKSLPSLPGEPSHQKQNTFRLLQRPGVMAGMIAIFMSFAGQFAFFTYIRPVYMNLAGFGVDGLTLVLLSFGIASFVGTSLSSFILKRSVKLALAGAPFVLALSALVLTLWGSDKIVATGVAIIWGLTFALIPVGWSTWITRSLADQAEKAGSIQVAVIQLANTCGAAIGGYALDNIGLTSPLMLSGTLMLLTALLVTAKVKMKKS.

Over 1-21 (MSEFIAENRGANAITRPNWSA) the chain is Cytoplasmic. The helical transmembrane segment at 22 to 42 (VFSVAFCVACLIIVEFLPVSL) threads the bilayer. Topologically, residues 43–54 (LTPMAQDLGISE) are periplasmic. Residues 55 to 75 (GVAGQSVTVTAFVAMFASLFI) traverse the membrane as a helical segment. Residues 76–85 (TQTIQATDRR) are Cytoplasmic-facing. Residues 86-106 (YVVILFAVLLTLSCLLVSFAN) traverse the membrane as a helical segment. Ser107 is a topological domain (periplasmic). Residues 108 to 128 (FSLLLIGRACLGVALGGFWAI) traverse the membrane as a helical segment. Residues 129–147 (SASLTMRLVPPRTVPKALS) are Cytoplasmic-facing. The chain crosses the membrane as a helical span at residues 148–168 (VIFGAVSIALVIAAPLGSFLG). At 169 to 175 (ELIGWRN) the chain is on the periplasmic side. A helical transmembrane segment spans residues 176 to 196 (VFNAAAAMGVLCIFWIIKSLP). The Cytoplasmic portion of the chain corresponds to 197-215 (SLPGEPSHQKQNTFRLLQR). A helical transmembrane segment spans residues 216–236 (PGVMAGMIAIFMSFAGQFAFF). The Periplasmic segment spans residues 237–255 (TYIRPVYMNLAGFGVDGLT). Residues 256-276 (LVLLSFGIASFVGTSLSSFIL) form a helical membrane-spanning segment. The Cytoplasmic portion of the chain corresponds to 277 to 281 (KRSVK). The chain crosses the membrane as a helical span at residues 282–302 (LALAGAPFVLALSALVLTLWG). The Periplasmic portion of the chain corresponds to 303 to 305 (SDK). The chain crosses the membrane as a helical span at residues 306–326 (IVATGVAIIWGLTFALIPVGW). Topologically, residues 327-343 (STWITRSLADQAEKAGS) are cytoplasmic. The chain crosses the membrane as a helical span at residues 344–364 (IQVAVIQLANTCGAAIGGYAL). Over 365-366 (DN) the chain is Periplasmic. Residues 367 to 387 (IGLTSPLMLSGTLMLLTALLV) traverse the membrane as a helical segment. Over 388 to 396 (TAKVKMKKS) the chain is Cytoplasmic.

This sequence belongs to the major facilitator superfamily. DHA1 family. NepI (TC 2.A.1.2.26) subfamily.

The protein resides in the cell inner membrane. The catalysed reaction is inosine(in) + H(+)(out) = inosine(out) + H(+)(in). The enzyme catalyses guanosine(in) + H(+)(out) = guanosine(out) + H(+)(in). In terms of biological role, involved in the efflux of purine ribonucleosides, such as inosine and guanosine. The sequence is that of Purine ribonucleoside efflux pump NepI from Escherichia coli O6:K15:H31 (strain 536 / UPEC).